A 360-amino-acid chain; its full sequence is Magnesium transporter NIPA2 (360 aa).

Topologically, residues 1 to 9 (MSQGHGKYD) are extracellular. A helical membrane pass occupies residues 10-30 (FYIGLGLAMSSSIFIGGSFIL). Residues 31–56 (KKKGLLRLARKGSTRAGQGGHAYLKE) lie on the Cytoplasmic side of the membrane. Residues 57-77 (WLWWAGLLSMGAGEVANFAAY) traverse the membrane as a helical segment. A topological domain (extracellular) is located at residue A78. The helical transmembrane segment at 79-99 (FAPATLVTPLGALSVLVSAIL) threads the bilayer. Over 100-107 (SSYFLNER) the chain is Cytoplasmic. A helical transmembrane segment spans residues 108 to 128 (LNLHGKIGCLLSILGSTVMVI). The Extracellular portion of the chain corresponds to 129-149 (HAPKEEEIETLNEMSHKLGDP). Residues 150–170 (GFVVFATLVVIVSLILIFVVG) traverse the membrane as a helical segment. Residues 171–175 (PRHGQ) lie on the Cytoplasmic side of the membrane. Residues 176-196 (TNILVYITICSVIGAVSVSCA) traverse the membrane as a helical segment. Residues 197-215 (KGLGIAIKELFAGKPVLQH) lie on the Extracellular side of the membrane. A helical membrane pass occupies residues 216 to 236 (PLTWILLLSLIVCVSTQINYL). At 237-246 (NRALDIFNTS) the chain is on the cytoplasmic side. A helical transmembrane segment spans residues 247-267 (IVTPIYYVFFTTSVITCSAIL). The Extracellular portion of the chain corresponds to 268-278 (FKEWQDMPVDD). A helical membrane pass occupies residues 279-299 (VIGTLSGFFTIIVGIFLLHAF). The Cytoplasmic portion of the chain corresponds to 300-360 (KDVSFSLSSL…SRRNGNLTAF (61 aa)).

Belongs to the NIPA family.

It is found in the cell membrane. Its subcellular location is the early endosome. It carries out the reaction Mg(2+)(in) = Mg(2+)(out). Acts as a selective Mg(2+) transporter. This is Magnesium transporter NIPA2 (NIPA2) from Bos taurus (Bovine).